Reading from the N-terminus, the 134-residue chain is Viral interleukin-8 homolog (134 aa).

The N-terminal stretch at 1-22 is a signal peptide; the sequence is MQALLLVLVLFIVQIYLLPGNG.

The protein belongs to the intercrine alpha (chemokine CxC) family. In terms of assembly, homodimer.

It localises to the secreted. Functionally, plays a role in the early phase of cytolytic infections presumably by recruiting host B or T-lymphocytes. The sequence is that of Viral interleukin-8 homolog (MDV078) from Gallus gallus (Chicken).